The sequence spans 415 residues: Corticotropin-releasing factor receptor 1 (415 aa).

The N-terminal stretch at M1–A23 is a signal peptide. At S24–K111 the chain is on the extracellular side. 3 disulfide bridges follow: C30–C54, C44–C87, and C68–C102. Residues N38, N78, and N98 are each glycosylated (N-linked (GlcNAc...) asparagine). The segment at Y99–E108 is important for peptide agonist binding. A helical membrane pass occupies residues S112 to L142. At R143 to C149 the chain is on the cytoplasmic side. Residues L150 to L174 traverse the membrane as a helical segment. Over T175 to R189 the chain is Extracellular. C188 and C258 are disulfide-bonded. Residues L190–V218 form a helical membrane-spanning segment. At L219–R225 the chain is on the cytoplasmic side. The chain crosses the membrane as a helical span at residues L226–Y253. Residues D254–D269 are Extracellular-facing. A helical transmembrane segment spans residues Y270 to M295. The interval L280 to I290 is important for antagonist binding. At T296–T306 the chain is on the cytoplasmic side. S301 is modified (phosphoserine; by PKA). A helical membrane pass occupies residues I307–F331. Residues V332–E338 are Extracellular-facing. Residues V339–S368 traverse the membrane as a helical segment. Topologically, residues E369–V415 are cytoplasmic.

It belongs to the G-protein coupled receptor 2 family. Heterodimer; heterodimerizes with GPER1. Interacts (via N-terminal extracellular domain) with CRH and UCN. Interacts with DLG1; this inhibits endocytosis of CRHR1 after agonist binding. C-terminal Ser or Thr residues may be phosphorylated. In terms of processing, phosphorylation at Ser-301 by PKA prevents maximal coupling to Gq-protein, and thereby negatively regulates downstream signaling. Expressed abundantly in the pituitary, cerebral cortex, hippocampus, amygdala and cerebellum.

Its subcellular location is the cell membrane. It is found in the endosome. Functionally, G-protein coupled receptor for CRH (corticotropin-releasing factor) and UCN (urocortin). Has high affinity for CRH and UCN. Ligand binding causes a conformation change that triggers signaling via guanine nucleotide-binding proteins (G proteins) and down-stream effectors, such as adenylate cyclase. Promotes the activation of adenylate cyclase, leading to increased intracellular cAMP levels. Inhibits the activity of the calcium channel CACNA1H. Required for normal embryonic development of the adrenal gland and for normal hormonal responses to stress. Plays a role in the response to anxiogenic stimuli. The chain is Corticotropin-releasing factor receptor 1 (CRHR1) from Macaca mulatta (Rhesus macaque).